The following is a 339-amino-acid chain: MRVYYDRDADLARILDRKIAIVGYGSQGHAHALNLRDSGIKNVAVALRAGSPTAKKAEGEGLKVMTVAEAAAWADLIMILAPDEHQAAIYKNEIALNIRDGAALLFAHGLNVHFGLIEPKDTIDVLMVAPKGPGHTVRGEYQKGGGVPCLIAVHHNATGNALDLGLAYASAIGGGRSGIIETNFREECETDLFGEQAVLCGGTVELVRAGFETLVEAGYAPEMAYFECLHELKLIVDLMYEGGIANMNYSISNTAEYGEYVTGPRIITPETKAEMKRVLEDIQSGKFVRDFMLENAVGQPSFKATRRRSAEHQIEEVGARLRGMMPWIAKNKLVDQAKN.

Positions 1-182 (MRVYYDRDAD…GGGRSGIIET (182 aa)) constitute a KARI N-terminal Rossmann domain. NADP(+)-binding positions include 24 to 27 (YGSQ), Arg-48, Ser-51, Thr-53, and 83 to 86 (DEHQ). His-108 is an active-site residue. Gly-134 is a binding site for NADP(+). Positions 183–328 (NFREECETDL…ARLRGMMPWI (146 aa)) constitute a KARI C-terminal knotted domain. Mg(2+)-binding residues include Asp-191, Glu-195, Glu-227, and Glu-231. Ser-252 is a substrate binding site.

The protein belongs to the ketol-acid reductoisomerase family. It depends on Mg(2+) as a cofactor.

It carries out the reaction (2R)-2,3-dihydroxy-3-methylbutanoate + NADP(+) = (2S)-2-acetolactate + NADPH + H(+). The enzyme catalyses (2R,3R)-2,3-dihydroxy-3-methylpentanoate + NADP(+) = (S)-2-ethyl-2-hydroxy-3-oxobutanoate + NADPH + H(+). It participates in amino-acid biosynthesis; L-isoleucine biosynthesis; L-isoleucine from 2-oxobutanoate: step 2/4. It functions in the pathway amino-acid biosynthesis; L-valine biosynthesis; L-valine from pyruvate: step 2/4. In terms of biological role, involved in the biosynthesis of branched-chain amino acids (BCAA). Catalyzes an alkyl-migration followed by a ketol-acid reduction of (S)-2-acetolactate (S2AL) to yield (R)-2,3-dihydroxy-isovalerate. In the isomerase reaction, S2AL is rearranged via a Mg-dependent methyl migration to produce 3-hydroxy-3-methyl-2-ketobutyrate (HMKB). In the reductase reaction, this 2-ketoacid undergoes a metal-dependent reduction by NADPH to yield (R)-2,3-dihydroxy-isovalerate. The polypeptide is Ketol-acid reductoisomerase (NADP(+)) (Caulobacter vibrioides (strain ATCC 19089 / CIP 103742 / CB 15) (Caulobacter crescentus)).